Here is a 337-residue protein sequence, read N- to C-terminus: Ketol-acid reductoisomerase (NADP(+)) (337 aa).

Positions 1–180 (MFYEKDADVD…GGGKSGIIET (180 aa)) constitute a KARI N-terminal Rossmann domain. NADP(+) contacts are provided by residues 22-25 (YGSQ), R46, S49, S51, and 81-84 (DELQ). H106 is an active-site residue. G132 lines the NADP(+) pocket. The KARI C-terminal knotted domain occupies 181–326 (TFKDECETDL…AELRAMMPWI (146 aa)). 4 residues coordinate Mg(2+): D189, E193, E225, and E229. S250 serves as a coordination point for substrate.

The protein belongs to the ketol-acid reductoisomerase family. Requires Mg(2+) as cofactor.

It catalyses the reaction (2R)-2,3-dihydroxy-3-methylbutanoate + NADP(+) = (2S)-2-acetolactate + NADPH + H(+). It carries out the reaction (2R,3R)-2,3-dihydroxy-3-methylpentanoate + NADP(+) = (S)-2-ethyl-2-hydroxy-3-oxobutanoate + NADPH + H(+). The protein operates within amino-acid biosynthesis; L-isoleucine biosynthesis; L-isoleucine from 2-oxobutanoate: step 2/4. It participates in amino-acid biosynthesis; L-valine biosynthesis; L-valine from pyruvate: step 2/4. Its function is as follows. Involved in the biosynthesis of branched-chain amino acids (BCAA). Catalyzes an alkyl-migration followed by a ketol-acid reduction of (S)-2-acetolactate (S2AL) to yield (R)-2,3-dihydroxy-isovalerate. In the isomerase reaction, S2AL is rearranged via a Mg-dependent methyl migration to produce 3-hydroxy-3-methyl-2-ketobutyrate (HMKB). In the reductase reaction, this 2-ketoacid undergoes a metal-dependent reduction by NADPH to yield (R)-2,3-dihydroxy-isovalerate. This chain is Ketol-acid reductoisomerase (NADP(+)), found in Pelagibacter ubique (strain HTCC1062).